The primary structure comprises 92 residues: MSRSLKKGPFVDGYLLKKAETTRSSGRKEVIKMWSRRSTILPQFVGLTFGVHNGKKHVPVLVTEDMVGHKFGEFSPTRTYFGHTSDKKAKKG.

Belongs to the universal ribosomal protein uS19 family.

Functionally, protein S19 forms a complex with S13 that binds strongly to the 16S ribosomal RNA. This Parvibaculum lavamentivorans (strain DS-1 / DSM 13023 / NCIMB 13966) protein is Small ribosomal subunit protein uS19.